Consider the following 269-residue polypeptide: Phosphatidylglycerophosphate phosphatase 1, chloroplastic (269 aa).

The N-terminal 33 residues, 1 to 33 (MRSVPGPSPPCTRSLAHSCRAAARGPCGSARPR), are a transit peptide targeting the chloroplast. The tract at residues 25–46 (GPCGSARPRARSVSARAHSSEA) is disordered. The segment covering 29–46 (SARPRARSVSARAHSSEA) has biased composition (low complexity). Positions 103-107 (DKDNT) match the Phosphoryl acceptor motif.

This sequence belongs to the HAD-like hydrolase superfamily.

It localises to the plastid. It is found in the chloroplast. It carries out the reaction a 1,2-diacyl-sn-glycero-3-phospho-(1'-sn-glycero-3'-phosphate) + H2O = a 1,2-diacyl-sn-glycero-3-phospho-(1'-sn-glycerol) + phosphate. It functions in the pathway phospholipid metabolism; phosphatidylglycerol biosynthesis; phosphatidylglycerol from CDP-diacylglycerol: step 2/2. Functionally, phosphatidylglycerophosphate phosphatase involved in the biosynthesis of phosphatidylglycerol (PG), a phosphoglycerolipid predominantly present in chloroplastic thylakoid membranes and which has important photosynthetic function. Required for thylakoid membranes development and chloroplast function. The chain is Phosphatidylglycerophosphate phosphatase 1, chloroplastic from Chlamydomonas reinhardtii (Chlamydomonas smithii).